A 437-amino-acid chain; its full sequence is MKFSSVLKQSAKYAAHVPKSGVFPRGFQVGSIASGVKKNGNLDLGVLVNTNKSYESSAASVFTTNKFKAAPVILSQRVLEEKNGKGINAIVVNSGCANSVTGEVGLQDATQMAKLIDEKLGATSPSTLIMSTGVIGQRLQMDKISKGVSQLFANNSFGSDFNSWLNIAKSICTTDTFPKLITSNFTLKNGTQYTLTGMAKGAGMICPNMATLLGFIVTDLPIESKALSKMLKFATDRSFNCISVDGDMSTNDTINMIANGAVKTDEITEDSPEFLQVRDQVTQFAQKLAQLVVRDGEGATKFVTVKVQNSSTFADAKIIAESISNSMLVKTALYGKDANWGRILCAIGYAKLDNLDSLQTDKLNVSFVATDNSEPRELKLLVNGVPQLNIDEERASQILALPDLEVLVDLGTGNEEAQFWTCDLSHEYVTINGDYRS.

6 residues coordinate substrate: T173, K200, T211, E297, N432, and S437. T211 serves as the catalytic Nucleophile.

This sequence belongs to the ArgJ family. In terms of assembly, heterodimer of an alpha and a beta chain. The alpha and beta chains are autoproteolytically processed from a single precursor protein within the mitochondrion.

It localises to the mitochondrion matrix. It carries out the reaction N(2)-acetyl-L-ornithine + L-glutamate = N-acetyl-L-glutamate + L-ornithine. The catalysed reaction is L-glutamate + acetyl-CoA = N-acetyl-L-glutamate + CoA + H(+). Its pathway is amino-acid biosynthesis; L-arginine biosynthesis; L-ornithine and N-acetyl-L-glutamate from L-glutamate and N(2)-acetyl-L-ornithine (cyclic): step 1/1. It functions in the pathway amino-acid biosynthesis; L-arginine biosynthesis; N(2)-acetyl-L-ornithine from L-glutamate: step 1/4. Functionally, catalyzes two activities which are involved in the cyclic version of arginine biosynthesis: the synthesis of acetylglutamate from glutamate and acetyl-CoA, and of ornithine by transacetylation between acetylornithine and glutamate. In Zygosaccharomyces rouxii (strain ATCC 2623 / CBS 732 / NBRC 1130 / NCYC 568 / NRRL Y-229), this protein is Arginine biosynthesis bifunctional protein ArgJ, mitochondrial.